Reading from the N-terminus, the 364-residue chain is Probable dual-specificity RNA methyltransferase RlmN (364 aa).

The Proton acceptor role is filled by Glu106. The region spanning 112-350 (YPQRNTVCIS…SCTVRDTRGR (239 aa)) is the Radical SAM core domain. Cys119 and Cys356 are disulfide-bonded. Residues Cys126, Cys130, and Cys133 each coordinate [4Fe-4S] cluster. S-adenosyl-L-methionine contacts are provided by residues 177 to 178 (GE), Ser211, 234 to 236 (SLH), and Asn313. The S-methylcysteine intermediate role is filled by Cys356.

Belongs to the radical SAM superfamily. RlmN family. Requires [4Fe-4S] cluster as cofactor.

The protein localises to the cytoplasm. The catalysed reaction is adenosine(2503) in 23S rRNA + 2 reduced [2Fe-2S]-[ferredoxin] + 2 S-adenosyl-L-methionine = 2-methyladenosine(2503) in 23S rRNA + 5'-deoxyadenosine + L-methionine + 2 oxidized [2Fe-2S]-[ferredoxin] + S-adenosyl-L-homocysteine. It catalyses the reaction adenosine(37) in tRNA + 2 reduced [2Fe-2S]-[ferredoxin] + 2 S-adenosyl-L-methionine = 2-methyladenosine(37) in tRNA + 5'-deoxyadenosine + L-methionine + 2 oxidized [2Fe-2S]-[ferredoxin] + S-adenosyl-L-homocysteine. Functionally, specifically methylates position 2 of adenine 2503 in 23S rRNA and position 2 of adenine 37 in tRNAs. This Mycobacterium ulcerans (strain Agy99) protein is Probable dual-specificity RNA methyltransferase RlmN.